A 259-amino-acid polypeptide reads, in one-letter code: HTH-type transcriptional regulator Rv1719 (259 aa).

One can recognise an HTH iclR-type domain in the interval 13–75; that stretch reads IQVIARAAEL…GARGPYRLGP (63 aa). The H-T-H motif DNA-binding region spans 35–54; it reads QAEIGERVGMARSTVSRILN. The 172-residue stretch at 88 to 259 folds into the IclR-ED domain; the sequence is VVTEMHPFLT…AWFNGTEDRK (172 aa).

In terms of assembly, homodimer.

Binds to the upstream region of Rv1714 and probably modulates the expression of the downstream gene(s). The sequence is that of HTH-type transcriptional regulator Rv1719 from Mycobacterium tuberculosis (strain ATCC 25618 / H37Rv).